We begin with the raw amino-acid sequence, 197 residues long: Phosphoheptose isomerase (197 aa).

One can recognise an SIS domain in the interval 37-197 (MLQCLMNDGK…CIDSVLLEGM (161 aa)). Residue 52–54 (NGG) participates in substrate binding. Zn(2+) is bound by residues H61 and E65. Residues E65, 94–95 (ND), 120–122 (STS), S125, and Q175 contribute to the substrate site. Residues Q175 and H183 each contribute to the Zn(2+) site.

It belongs to the SIS family. GmhA subfamily. As to quaternary structure, homotetramer. Requires Zn(2+) as cofactor.

It localises to the cytoplasm. It catalyses the reaction 2 D-sedoheptulose 7-phosphate = D-glycero-alpha-D-manno-heptose 7-phosphate + D-glycero-beta-D-manno-heptose 7-phosphate. It functions in the pathway carbohydrate biosynthesis; D-glycero-D-manno-heptose 7-phosphate biosynthesis; D-glycero-alpha-D-manno-heptose 7-phosphate and D-glycero-beta-D-manno-heptose 7-phosphate from sedoheptulose 7-phosphate: step 1/1. It participates in bacterial outer membrane biogenesis; LOS core biosynthesis. Catalyzes the isomerization of sedoheptulose 7-phosphate in D-glycero-D-manno-heptose 7-phosphate. The chain is Phosphoheptose isomerase from Neisseria meningitidis serogroup A / serotype 4A (strain DSM 15465 / Z2491).